The chain runs to 285 residues: RNA polymerase sigma factor RpoH (285 aa).

Positions 53 to 122 (LILSHLRFVV…IHEYVLRNWR (70 aa)) are sigma-70 factor domain-2. Positions 77-80 (DLVQ) match the Interaction with polymerase core subunit RpoC motif. Residues 229–280 (ALASLDERSQHIVRSRWLDDDKATLQDLAEMYGVSAERIRQLEKNAMKKLKM) are sigma-70 factor domain-4. Residues 253–272 (LQDLAEMYGVSAERIRQLEK) constitute a DNA-binding region (H-T-H motif).

This sequence belongs to the sigma-70 factor family. RpoH subfamily. Interacts with the RNA polymerase core enzyme.

The protein resides in the cytoplasm. Sigma factors are initiation factors that promote the attachment of RNA polymerase to specific initiation sites and are then released. This sigma factor is involved in regulation of expression of heat shock genes. This Vibrio vulnificus (strain CMCP6) protein is RNA polymerase sigma factor RpoH.